We begin with the raw amino-acid sequence, 41 residues long: Large ribosomal subunit protein bL36 (41 aa).

Belongs to the bacterial ribosomal protein bL36 family.

The polypeptide is Large ribosomal subunit protein bL36 (Rickettsia massiliae (strain Mtu5)).